Consider the following 233-residue polypeptide: Preflagellin peptidase (233 aa).

Position 1 (Met-1) is a topological domain, cytoplasmic. The chain crosses the membrane as a helical span at residues 2–18 (IAYAIGLLGLLIASIQD). The Extracellular segment spans residues 19 to 23 (IKSRE). Residues 24–46 (IENYIWIGMAVIGLLLSTYLSFT) traverse the membrane as a helical segment. The Cytoplasmic segment spans residues 47–49 (TGN). The helical transmembrane segment at 50–72 (FMPIISSISGFIICFIIGYLMFV) threads the bilayer. The Extracellular portion of the chain corresponds to 73–78 (LGIGGA). Residues 79–89 (DGKILMGMGAL) traverse the membrane as a helical segment. Over 90–110 (IPSYAFPVYSSLQPLYTMEYI) the chain is Cytoplasmic. A helical transmembrane segment spans residues 111–139 (PWFPLLVFFNGVILMIVLPIYLFFKNLSN). Topologically, residues 140 to 207 (GVKPKKLKEY…QYVWATPELP (68 aa)) are extracellular. A helical transmembrane segment spans residues 208–219 (LLVPIALSYIIT). The Cytoplasmic portion of the chain corresponds to 220-233 (PFLGDKILSIILPM).

This sequence belongs to the peptidase A24 family. Archaeal preflagellin peptidase subfamily.

It localises to the cell membrane. The enzyme catalyses Cleaves the signal peptide of 3 to 12 amino acids from the N-terminal of preflagellin, usually at Arg-Gly-|- or Lys-Gly-|-, to release flagellin.. Cleaves the N-terminal leader peptide from preflagellins. The processing of preflagellins is necessary for assembly of flagellins into a flagellum structure. In Methanococcus voltae, this protein is Preflagellin peptidase (flaK).